We begin with the raw amino-acid sequence, 95 residues long: MAYHWQVISRLLIALLRVYKLVISPLLGPRCRFAPSCSDYAMTAIGRFGPLRGSWLAARRLGRCHPFHPGGFDPVPDAPTSPSPSSSCSCKGPHP.

A disordered region spans residues 72 to 95; that stretch reads FDPVPDAPTSPSPSSSCSCKGPHP. Low complexity predominate over residues 83–95; that stretch reads SPSSSCSCKGPHP.

This sequence belongs to the UPF0161 family.

The protein localises to the cell inner membrane. Its function is as follows. Could be involved in insertion of integral membrane proteins into the membrane. The chain is Putative membrane protein insertion efficiency factor from Xanthomonas axonopodis pv. citri (strain 306).